The primary structure comprises 345 residues: Dihydroorotase (345 aa).

Histidine 14 and histidine 16 together coordinate Zn(2+). Residues 16–18 (HLR) and asparagine 42 each bind substrate. Zn(2+) contacts are provided by lysine 100, histidine 137, and histidine 175. Lysine 100 is modified (N6-carboxylysine). Histidine 137 serves as a coordination point for substrate. Substrate is bound at residue leucine 220. Aspartate 248 lines the Zn(2+) pocket. Residue aspartate 248 is part of the active site. Substrate is bound by residues histidine 252 and alanine 264.

Belongs to the metallo-dependent hydrolases superfamily. DHOase family. Class II DHOase subfamily. As to quaternary structure, homodimer. Zn(2+) serves as cofactor.

It carries out the reaction (S)-dihydroorotate + H2O = N-carbamoyl-L-aspartate + H(+). It functions in the pathway pyrimidine metabolism; UMP biosynthesis via de novo pathway; (S)-dihydroorotate from bicarbonate: step 3/3. Catalyzes the reversible cyclization of carbamoyl aspartate to dihydroorotate. In Methylobacillus flagellatus (strain ATCC 51484 / DSM 6875 / VKM B-1610 / KT), this protein is Dihydroorotase.